The chain runs to 202 residues: MKKQLTKKQEEILEFIKKRIKEKGYPPAVREICEATGLKSTSTVHGHLTRLEKKGYIRRDPSKPRAIEIVDDDFYVHRNVIRLPLVGKVTAGEPILAVENIEDTITLPYDLVGTEDAFLLRVKGDSMIDAGIFDNDIIIVKRQNVAENGDIVVALIDDEATVKRFFKESDHIRLQPENKAMEPIIVKDVKILGKVIGLIRRM.

A DNA-binding region (H-T-H motif) is located at residues 29 to 49 (VREICEATGLKSTSTVHGHLT). Active-site for autocatalytic cleavage activity residues include Ser-126 and Lys-163.

It belongs to the peptidase S24 family. Homodimer.

The catalysed reaction is Hydrolysis of Ala-|-Gly bond in repressor LexA.. Its function is as follows. Represses a number of genes involved in the response to DNA damage (SOS response), including recA and lexA. In the presence of single-stranded DNA, RecA interacts with LexA causing an autocatalytic cleavage which disrupts the DNA-binding part of LexA, leading to derepression of the SOS regulon and eventually DNA repair. The polypeptide is LexA repressor (Caldicellulosiruptor saccharolyticus (strain ATCC 43494 / DSM 8903 / Tp8T 6331)).